A 100-amino-acid polypeptide reads, in one-letter code: Large ribosomal subunit protein bL21 (100 aa).

It belongs to the bacterial ribosomal protein bL21 family. Part of the 50S ribosomal subunit. Contacts protein L20.

Its function is as follows. This protein binds to 23S rRNA in the presence of protein L20. This is Large ribosomal subunit protein bL21 from Mycoplasma mycoides subsp. mycoides SC (strain CCUG 32753 / NCTC 10114 / PG1).